Here is a 306-residue protein sequence, read N- to C-terminus: Pantothenate synthetase (306 aa).

37–44 is an ATP binding site; the sequence is MGALHEGH. Catalysis depends on His-44, which acts as the Proton donor. Position 69 (Gln-69) interacts with (R)-pantoate. Gln-69 is a binding site for beta-alanine. 155-158 lines the ATP pocket; it reads GEKD. Gln-161 contributes to the (R)-pantoate binding site. Residues Val-184 and 192–195 contribute to the ATP site; that span reads KSSR.

Belongs to the pantothenate synthetase family. Homodimer.

It is found in the cytoplasm. The enzyme catalyses (R)-pantoate + beta-alanine + ATP = (R)-pantothenate + AMP + diphosphate + H(+). It functions in the pathway cofactor biosynthesis; (R)-pantothenate biosynthesis; (R)-pantothenate from (R)-pantoate and beta-alanine: step 1/1. Catalyzes the condensation of pantoate with beta-alanine in an ATP-dependent reaction via a pantoyl-adenylate intermediate. The protein is Pantothenate synthetase of Corynebacterium jeikeium (strain K411).